A 261-amino-acid chain; its full sequence is Cytochrome c oxidase subunit 3 (261 aa).

At 1–15 the chain is on the mitochondrial matrix side; the sequence is MTHQTHAYHMVNPSP. A helical membrane pass occupies residues 16–34; the sequence is WPLTGALSALLMTSGLIMW. At 35-40 the chain is on the mitochondrial intermembrane side; that stretch reads FHFNST. The chain crosses the membrane as a helical span at residues 41–66; that stretch reads ILLMLGLTTNMLTMYQWWRDVIREST. Residues 67–72 are Mitochondrial matrix-facing; sequence FQGHHT. The chain crosses the membrane as a helical span at residues 73-105; that stretch reads PNVQKGLRYGMILFIISEVLFFTGFFWAFYHSS. Residues 106 to 128 are Mitochondrial intermembrane-facing; that stretch reads LAPTPELGGCWPPTGIHPLNPLE. Residues 129–152 traverse the membrane as a helical segment; sequence VPLLNTSVLLASGVSITWAHHSLM. At 153–155 the chain is on the mitochondrial matrix side; it reads EGN. Residues 156-183 traverse the membrane as a helical segment; that stretch reads RNHMLQALFITIALGVYFTLLQASEYYE. Residues 184–190 are Mitochondrial intermembrane-facing; that stretch reads APFTISD. The helical transmembrane segment at 191–223 threads the bilayer; sequence GVYGSTFFVATGFHGLHVIIGSTFLIVCFFRQL. Over 224-232 the chain is Mitochondrial matrix; that stretch reads KFHFTSNHH. Residues 233 to 256 traverse the membrane as a helical segment; sequence FGFEAAAWYWHFVDVVWLFLYVSI. Over 257 to 261 the chain is Mitochondrial intermembrane; sequence YWWGS.

Belongs to the cytochrome c oxidase subunit 3 family. Component of the cytochrome c oxidase (complex IV, CIV), a multisubunit enzyme composed of 14 subunits. The complex is composed of a catalytic core of 3 subunits MT-CO1, MT-CO2 and MT-CO3, encoded in the mitochondrial DNA, and 11 supernumerary subunits COX4I, COX5A, COX5B, COX6A, COX6B, COX6C, COX7A, COX7B, COX7C, COX8 and NDUFA4, which are encoded in the nuclear genome. The complex exists as a monomer or a dimer and forms supercomplexes (SCs) in the inner mitochondrial membrane with NADH-ubiquinone oxidoreductase (complex I, CI) and ubiquinol-cytochrome c oxidoreductase (cytochrome b-c1 complex, complex III, CIII), resulting in different assemblies (supercomplex SCI(1)III(2)IV(1) and megacomplex MCI(2)III(2)IV(2)).

The protein localises to the mitochondrion inner membrane. The enzyme catalyses 4 Fe(II)-[cytochrome c] + O2 + 8 H(+)(in) = 4 Fe(III)-[cytochrome c] + 2 H2O + 4 H(+)(out). Component of the cytochrome c oxidase, the last enzyme in the mitochondrial electron transport chain which drives oxidative phosphorylation. The respiratory chain contains 3 multisubunit complexes succinate dehydrogenase (complex II, CII), ubiquinol-cytochrome c oxidoreductase (cytochrome b-c1 complex, complex III, CIII) and cytochrome c oxidase (complex IV, CIV), that cooperate to transfer electrons derived from NADH and succinate to molecular oxygen, creating an electrochemical gradient over the inner membrane that drives transmembrane transport and the ATP synthase. Cytochrome c oxidase is the component of the respiratory chain that catalyzes the reduction of oxygen to water. Electrons originating from reduced cytochrome c in the intermembrane space (IMS) are transferred via the dinuclear copper A center (CU(A)) of subunit 2 and heme A of subunit 1 to the active site in subunit 1, a binuclear center (BNC) formed by heme A3 and copper B (CU(B)). The BNC reduces molecular oxygen to 2 water molecules using 4 electrons from cytochrome c in the IMS and 4 protons from the mitochondrial matrix. This is Cytochrome c oxidase subunit 3 (MT-CO3) from Eudorcas thomsonii (Thomson's gazelle).